Reading from the N-terminus, the 475-residue chain is MKLINTFATELPWACEPVAPQPLHAPALLHLNCALLGELGLVAVSEADWLACCGHGQPLPGMQPVAQVYAGHQFGGYSPRLGDGRALLLGEQQAPDGSRWDLHLKGAGKTPFSRFGDGRAVLRSSIREYLASEALHALGIPTTRALVLVGSQEPVYREQVETGATVLRTAPSHLRFGHVEYFAWSGQGERIPALIDYLLRHHFPELADGAELFAEVVRRTARLIAKWQAAGFCHGVMNTDNMSLLGLTLDYGPYGFIDAYVPDFVCNHSDPGGRYALDQQPAVGYWNLQKLAQALAGHVDGDALAEALAQYEHQLMLHYSELMRAKLGLAVWEEDDPVLFRELFQLLAAHGVDYHLFLRRLGEVTREGAWPASLLALLPEPAAWQGWLEAYRARLAREGSEDGVRKGLMDAVNPKYVLRNALAQRVIEAAEQGDMAPFERLFTALQHPYDEQPEYEELATPQPAWYCGGELSCSS.

ATP is bound by residues glycine 82, glycine 84, arginine 85, lysine 105, aspartate 117, glycine 118, arginine 168, and arginine 175. The active-site Proton acceptor is the aspartate 240. Asparagine 241 and aspartate 250 together coordinate Mg(2+). Aspartate 250 contacts ATP.

Belongs to the SELO family. It depends on Mg(2+) as a cofactor. Mn(2+) serves as cofactor.

It catalyses the reaction L-seryl-[protein] + ATP = 3-O-(5'-adenylyl)-L-seryl-[protein] + diphosphate. It carries out the reaction L-threonyl-[protein] + ATP = 3-O-(5'-adenylyl)-L-threonyl-[protein] + diphosphate. The catalysed reaction is L-tyrosyl-[protein] + ATP = O-(5'-adenylyl)-L-tyrosyl-[protein] + diphosphate. The enzyme catalyses L-histidyl-[protein] + UTP = N(tele)-(5'-uridylyl)-L-histidyl-[protein] + diphosphate. It catalyses the reaction L-seryl-[protein] + UTP = O-(5'-uridylyl)-L-seryl-[protein] + diphosphate. It carries out the reaction L-tyrosyl-[protein] + UTP = O-(5'-uridylyl)-L-tyrosyl-[protein] + diphosphate. In terms of biological role, nucleotidyltransferase involved in the post-translational modification of proteins. It can catalyze the addition of adenosine monophosphate (AMP) or uridine monophosphate (UMP) to a protein, resulting in modifications known as AMPylation and UMPylation. This is Protein nucleotidyltransferase YdiU from Aeromonas hydrophila subsp. hydrophila (strain ATCC 7966 / DSM 30187 / BCRC 13018 / CCUG 14551 / JCM 1027 / KCTC 2358 / NCIMB 9240 / NCTC 8049).